The primary structure comprises 359 residues: MQTLADLLNTIPAIDPAAMSRAQRHIDGLLKPVGSLGRLEALAIQLAGMPGLNGIPHVGKKAVLVMCADHGVWEEGVAISPKEVTAIQAENMTRGTTGVCVLAAQAGANVHVIDVGIDTAEPIPGLINMRVARGSGNIASAPAMSRRQAVKLLLDVICYTRELAKNGVTLFGVGELGMANTTPAAAIVSTITGRAPEEVVGIGANLPTDKLANKIDVVRRAITLNQPNPQDGVDVLAKVGGFDLVGMAGVMLGAASCGLPVLLDGFLSYAAALAACQMSPAIKPYLIPSHLSAEKGARIALSHLGLEPYLNMEMRLGEGSGAALAMPIIEAACAIYNNMGELAASNIVLPGNTTSDLNS.

Catalysis depends on E318, which acts as the Proton acceptor.

Belongs to the CobT family. In terms of assembly, homodimer.

The enzyme catalyses 5,6-dimethylbenzimidazole + nicotinate beta-D-ribonucleotide = alpha-ribazole 5'-phosphate + nicotinate + H(+). The protein operates within nucleoside biosynthesis; alpha-ribazole biosynthesis; alpha-ribazole from 5,6-dimethylbenzimidazole: step 1/2. Its function is as follows. Catalyzes the synthesis of alpha-ribazole-5'-phosphate from nicotinate mononucleotide (NAMN) and 5,6-dimethylbenzimidazole (DMB). This chain is Nicotinate-nucleotide--dimethylbenzimidazole phosphoribosyltransferase, found in Escherichia coli O8 (strain IAI1).